Consider the following 431-residue polypeptide: Enolase (431 aa).

Glutamine 166 contacts (2R)-2-phosphoglycerate. Residue glutamate 208 is the Proton donor of the active site. Residues aspartate 245, glutamate 288, and aspartate 315 each coordinate Mg(2+). (2R)-2-phosphoglycerate-binding residues include lysine 340, arginine 369, serine 370, and lysine 391. Catalysis depends on lysine 340, which acts as the Proton acceptor.

Belongs to the enolase family. It depends on Mg(2+) as a cofactor.

It localises to the cytoplasm. The protein localises to the secreted. The protein resides in the cell surface. The catalysed reaction is (2R)-2-phosphoglycerate = phosphoenolpyruvate + H2O. The protein operates within carbohydrate degradation; glycolysis; pyruvate from D-glyceraldehyde 3-phosphate: step 4/5. In terms of biological role, catalyzes the reversible conversion of 2-phosphoglycerate (2-PG) into phosphoenolpyruvate (PEP). It is essential for the degradation of carbohydrates via glycolysis. The sequence is that of Enolase from Clostridium botulinum (strain Kyoto / Type A2).